The sequence spans 147 residues: Myosin-2 essential light chain (147 aa).

EF-hand domains follow at residues 7–42 (DQLA…LGQN), 80–115 (DTAD…LGEK), and 115–147 (KLTD…VMSG). Ser-30 carries the phosphoserine modification. The Ca(2+) site is built by Asp-93, Asp-95, Ser-97, Tyr-99, and Glu-104.

Myosin is a hexamer of 2 heavy chains and 4 light chains.

This Drosophila melanogaster (Fruit fly) protein is Myosin-2 essential light chain (Mlc-c).